The chain runs to 34 residues: MSDIN-like toxin proprotein 12 (34 aa).

Residues 1–10 (MSDINATRLP) constitute a propeptide that is removed on maturation. Residues 11 to 19 (HPFPLGLQP) constitute a cross-link (cyclopeptide (His-Pro)). Residues 20-34 (CAGDVDNLTLTKGEG) constitute a propeptide that is removed on maturation.

The protein belongs to the MSDIN fungal toxin family. Processed by the macrocyclase-peptidase enzyme POPB to yield a toxic cyclic nonapeptide. POPB first removes 10 residues from the N-terminus. Conformational trapping of the remaining peptide forces the enzyme to release this intermediate rather than proceed to macrocyclization. The enzyme rebinds the remaining peptide in a different conformation and catalyzes macrocyclization of the N-terminal 9 residues.

Probable toxin that belongs to the MSDIN-like toxin family responsible for a large number of food poisoning cases and deaths. The protein is MSDIN-like toxin proprotein 12 of Amanita bisporigera (Destroying angel).